We begin with the raw amino-acid sequence, 111 residues long: Gastrula zinc finger protein XlCGF32.1 (111 aa).

C2H2-type zinc fingers lie at residues 6-28, 34-56, 62-84, and 89-111; these read FDCT…FLCH, FVCV…LRIH, SVCP…MRIH, and FMCS…LQIH.

It belongs to the krueppel C2H2-type zinc-finger protein family.

The protein resides in the nucleus. Functionally, may be involved in transcriptional regulation. This chain is Gastrula zinc finger protein XlCGF32.1, found in Xenopus laevis (African clawed frog).